Here is a 340-residue protein sequence, read N- to C-terminus: S-adenosylmethionine:tRNA ribosyltransferase-isomerase (340 aa).

It belongs to the QueA family. As to quaternary structure, monomer.

It is found in the cytoplasm. The enzyme catalyses 7-aminomethyl-7-carbaguanosine(34) in tRNA + S-adenosyl-L-methionine = epoxyqueuosine(34) in tRNA + adenine + L-methionine + 2 H(+). The protein operates within tRNA modification; tRNA-queuosine biosynthesis. Transfers and isomerizes the ribose moiety from AdoMet to the 7-aminomethyl group of 7-deazaguanine (preQ1-tRNA) to give epoxyqueuosine (oQ-tRNA). In Chromobacterium violaceum (strain ATCC 12472 / DSM 30191 / JCM 1249 / CCUG 213 / NBRC 12614 / NCIMB 9131 / NCTC 9757 / MK), this protein is S-adenosylmethionine:tRNA ribosyltransferase-isomerase.